Reading from the N-terminus, the 408-residue chain is Cell division protein FtsZ 2 (408 aa).

GTP-binding positions include 130-132 (GTG), E169, R173, and D216.

Belongs to the FtsZ family. In terms of assembly, homodimer. Polymerizes to form a dynamic ring structure in a strictly GTP-dependent manner. Interacts directly with several other division proteins.

It is found in the cytoplasm. Its function is as follows. Essential cell division protein that forms a contractile ring structure (Z ring) at the future cell division site. The regulation of the ring assembly controls the timing and the location of cell division. One of the functions of the FtsZ ring is to recruit other cell division proteins to the septum to produce a new cell wall between the dividing cells. Binds GTP and shows GTPase activity. In Pyrococcus furiosus (strain ATCC 43587 / DSM 3638 / JCM 8422 / Vc1), this protein is Cell division protein FtsZ 2.